The primary structure comprises 440 residues: Protein eva-1 homolog C (440 aa).

Residues 1–13 are compositionally biased toward pro residues; that stretch reads MLLPGHPRPPPAP. Residues 1-23 are disordered; it reads MLLPGHPRPPPAPQSAQNQGLRR. Positions 1 to 48 are cleaved as a signal peptide; that stretch reads MLLPGHPRPPPAPQSAQNQGLRRQVEPPGQLLRLFYCTVLVCSKETSA. At 49-321 the chain is on the extracellular side; it reads LTDFSGYLTK…AYIRAHPERA (273 aa). N-linked (GlcNAc...) asparagine glycans are attached at residues Asn62, Asn109, and Asn165. The SUEL-type lectin 1 domain maps to 67–159; it reads ACDGDYLNLQ…KYLLVSFKCQ (93 aa). One can recognise an SUEL-type lectin 2 domain in the interval 168 to 260; it reads VCENQELKLH…KYLTVAYACV (93 aa). The helical transmembrane segment at 322-342 threads the bilayer; sequence ALLFMSSVCIGLLLTLCALVI. Topologically, residues 343-440 are cytoplasmic; it reads RVSCTKDFRE…SLPRNVGHFY (98 aa). Positions 364 to 384 are disordered; it reads SDKAEEDSEEDLEEEDSSDSQ. Acidic residues predominate over residues 367 to 381; the sequence is AEEDSEEDLEEEDSS.

The protein belongs to the EVA1 family. As to expression, ubiquitous.

It is found in the cell membrane. Binds heparin. The polypeptide is Protein eva-1 homolog C (Eva1c) (Mus musculus (Mouse)).